The sequence spans 273 residues: Tryptase (273 aa).

Positions 1 to 18 (MLKLLLLTLPLLSSLVHA) are cleaved as a signal peptide. Residues 19–28 (APSLAMPREG) constitute a propeptide, activation peptide. The Peptidase S1 domain occupies 29–270 (IVGGQEASGN…YLDWIYRYVP (242 aa)). Residue Asn-49 is glycosylated (N-linked (GlcNAc...) asparagine). An intrachain disulfide couples Cys-57 to Cys-73. Active-site charge relay system residues include His-72 and Asp-119. 3 disulfides stabilise this stretch: Cys-153-Cys-228, Cys-186-Cys-209, and Cys-218-Cys-246. Ser-222 acts as the Charge relay system in catalysis.

It belongs to the peptidase S1 family. Tryptase subfamily. Homotetramer. Glycosylated. Mast cells.

Its subcellular location is the secreted. It catalyses the reaction Preferential cleavage: Arg-|-Xaa, Lys-|-Xaa, but with more restricted specificity than trypsin.. Functionally, tryptase is the major neutral protease present in mast cells and is secreted upon the coupled activation-degranulation response of this cell type. May play a role in innate immunity. This is Tryptase (Tpsab1) from Rattus norvegicus (Rat).